A 21-amino-acid polypeptide reads, in one-letter code: Bibrotoxin (21 aa).

2 disulfides stabilise this stretch: cysteine 1–cysteine 15 and cysteine 3–cysteine 11.

Belongs to the endothelin/sarafotoxin family. In terms of tissue distribution, expressed by the venom gland.

Its subcellular location is the secreted. Functionally, vasoconstrictor activity. These toxins cause cardiac arrest probably as a result of coronary vasospasm. May act by displaying agonistic activities towards endothelin-1 and -2 receptors (EDNRA and EDNRB). In Atractaspis bibronii (Bibron's mole viper), this protein is Bibrotoxin.